We begin with the raw amino-acid sequence, 420 residues long: Serine hydroxymethyltransferase (420 aa).

Residues Leu-121 and 125–127 each bind (6S)-5,6,7,8-tetrahydrofolate; that span reads GHL. Lys-230 is subject to N6-(pyridoxal phosphate)lysine. Residues Glu-246 and 354–356 each bind (6S)-5,6,7,8-tetrahydrofolate; that span reads SPF.

This sequence belongs to the SHMT family. Homodimer. The cofactor is pyridoxal 5'-phosphate.

The protein resides in the cytoplasm. The enzyme catalyses (6R)-5,10-methylene-5,6,7,8-tetrahydrofolate + glycine + H2O = (6S)-5,6,7,8-tetrahydrofolate + L-serine. Its pathway is one-carbon metabolism; tetrahydrofolate interconversion. The protein operates within amino-acid biosynthesis; glycine biosynthesis; glycine from L-serine: step 1/1. In terms of biological role, catalyzes the reversible interconversion of serine and glycine with tetrahydrofolate (THF) serving as the one-carbon carrier. This reaction serves as the major source of one-carbon groups required for the biosynthesis of purines, thymidylate, methionine, and other important biomolecules. Also exhibits THF-independent aldolase activity toward beta-hydroxyamino acids, producing glycine and aldehydes, via a retro-aldol mechanism. This chain is Serine hydroxymethyltransferase, found in Rickettsia peacockii (strain Rustic).